The primary structure comprises 514 residues: Maltose/maltodextrin transport system permease protein MalF (514 aa).

At 1–12 (MDAVKKKHWWQS) the chain is on the cytoplasmic side. Residues 13-35 (PQLTWSVIGLLCLLVGYLVVLMY) form a helical membrane-spanning segment. The Periplasmic segment spans residues 36–39 (AQGE). A helical transmembrane segment spans residues 40 to 57 (YLFAIMTLILSSVGLYIF). Residues 58–69 (SNRKAYAWRYVY) lie on the Cytoplasmic side of the membrane. A helical transmembrane segment spans residues 70-92 (PGLAGMGLFVLFPLICTIAIAFT). Topologically, residues 93 to 283 (NYSSTNQLTF…QKPFFAIFVW (191 aa)) are periplasmic. The ABC transmembrane type-1 domain occupies 281 to 505 (FVWTVVFSVL…LLVGALAIVN (225 aa)). Residues 284 to 306 (TVVFSVLTVILTVAVGMVLACLV) form a helical membrane-spanning segment. Residues 307–318 (QWEALKGKAIYR) are Cytoplasmic-facing. Residues 319-341 (VLLILPYAVPSFISILIFKGLFN) form a helical membrane-spanning segment. Over 342–369 (QSFGEINMMLSALFGIKPAWFSDPTTAR) the chain is Periplasmic. Residues 370-392 (TMIIIVNTWLGYPYMMILCMGLL) traverse the membrane as a helical segment. The Cytoplasmic segment spans residues 393-412 (KAIPDDLYEASAMDGAGPFQ). A helical transmembrane segment spans residues 413–435 (NFFKITLPLLIKPLTPLMIASFA). Residues 436 to 483 (FNFNNFVLIQLLTNGGPDRLGTTTPAGYTDLLVSYTYRIAFEGGGGQD) lie on the Periplasmic side of the membrane. The chain crosses the membrane as a helical span at residues 484–506 (FGLAAAIATLIFLLVGALAIVNL). Residues 507-514 (KATRMKFD) are Cytoplasmic-facing.

The protein belongs to the binding-protein-dependent transport system permease family. MalFG subfamily. As to quaternary structure, the complex is composed of two ATP-binding proteins (MalK), two transmembrane proteins (MalG and MalF) and a solute-binding protein (MalE).

It localises to the cell inner membrane. In terms of biological role, part of the ABC transporter complex MalEFGK involved in maltose/maltodextrin import. Probably responsible for the translocation of the substrate across the membrane. The protein is Maltose/maltodextrin transport system permease protein MalF (malF) of Klebsiella aerogenes (Enterobacter aerogenes).